We begin with the raw amino-acid sequence, 727 residues long: Epithelial splicing regulatory protein 2 (727 aa).

A disordered region spans residues 1 to 22 (MTPPPPPPPPPGPDPAADPAAD). Serine 83 bears the Phosphoserine mark. RRM domains follow at residues 257–353 (TVVR…RFLS), 358–438 (VILR…RSTA), and 475–555 (DCVR…PCST). Serine 573 carries the post-translational modification Phosphoserine.

This sequence belongs to the ESRP family. In terms of assembly, interacts with RBPMS. In terms of tissue distribution, epithelial cell-specific.

The protein localises to the nucleus. In terms of biological role, mRNA splicing factor that regulates the formation of epithelial cell-specific isoforms. Specifically regulates the expression of FGFR2-IIIb, an epithelial cell-specific isoform of FGFR2. Also regulates the splicing of CD44, CTNND1, ENAH, 3 transcripts that undergo changes in splicing during the epithelial-to-mesenchymal transition (EMT). Acts by directly binding specific sequences in mRNAs. Binds the GU-rich sequence motifs in the ISE/ISS-3, a cis-element regulatory region present in the mRNA of FGFR2. This chain is Epithelial splicing regulatory protein 2 (ESRP2), found in Homo sapiens (Human).